The primary structure comprises 391 residues: Multidrug resistance protein MdtL (391 aa).

Residues 1–3 (MSR) are Cytoplasmic-facing. Residues 4-24 (FLICSFALVLLYPAGIDMYLV) form a helical membrane-spanning segment. Over 25–41 (GLPRIAADLNASEAQLH) the chain is Periplasmic. A helical transmembrane segment spans residues 42 to 62 (IAFSVYLAGMAAAMLFAGKVA). Over 63-68 (DRSGRK) the chain is Cytoplasmic. The chain crosses the membrane as a helical span at residues 69–89 (PVAIPGAALFIITSVFCSLAE). Residues 90 to 92 (TST) lie on the Periplasmic side of the membrane. The chain crosses the membrane as a helical span at residues 93–113 (LFLAGRFLQGLGAGCCYVVAF). Residues 114 to 130 (AILRDTLDDRRRAKVLS) lie on the Cytoplasmic side of the membrane. The helical transmembrane segment at 131-151 (LLNGITCIIPVLAPVLGHLIM) threads the bilayer. Residues 152–157 (LKFPWQ) lie on the Periplasmic side of the membrane. Residues 158–178 (SLFWTMAIMGIAVLMLSLFIL) traverse the membrane as a helical segment. At 179-198 (KETRPAAPAASDKSRENSES) the chain is on the cytoplasmic side. The helical transmembrane segment at 199–221 (LLNRFFLSRVVITTLSVSVILTF) threads the bilayer. The Periplasmic portion of the chain corresponds to 222–244 (VNTSPVLLMEIMGFERGEYATIM). The chain crosses the membrane as a helical span at residues 245-265 (ALTAGVSMTVSFSTPFALGIF). Topologically, residues 266-268 (KPR) are cytoplasmic. The helical transmembrane segment at 269-289 (TLMITSQVLFLAAGITLTVSP) threads the bilayer. The Periplasmic segment spans residues 290–292 (SHA). Residues 293–313 (VSLFGITLICAGFSVGFGVAM) traverse the membrane as a helical segment. Over 314-330 (SQALGPFSLRAGVASST) the chain is Cytoplasmic. Residues 331–351 (LGIAQVCGSSLWIWLAAVVGI) form a helical membrane-spanning segment. Residues 352-355 (SAWN) lie on the Periplasmic side of the membrane. The helical transmembrane segment at 356–376 (MLIGILIACSIVSLLLIMFVA) threads the bilayer. Residues 377–391 (PGRPVTAHEEIHHHA) lie on the Cytoplasmic side of the membrane.

Belongs to the major facilitator superfamily. DHA1 family. MdtL (TC 2.A.1.2.22) subfamily.

It is found in the cell inner membrane. In terms of biological role, confers resistance to chloramphenicol. The polypeptide is Multidrug resistance protein MdtL (mdtL) (Escherichia coli O157:H7).